The sequence spans 407 residues: Biflaviolin synthase CYP158A1 (407 aa).

Residues 1–11 (MTQETTTLTGQ) are compositionally biased toward polar residues. A disordered region spans residues 1 to 20 (MTQETTTLTGQSPPPVRDWP). Flaviolin contacts are provided by residues Arg-92, Tyr-199, and 290–291 (HR). Residue Cys-356 coordinates heme.

This sequence belongs to the cytochrome P450 family. It depends on heme as a cofactor.

The catalysed reaction is 2 flaviolin + 2 reduced [2Fe-2S]-[ferredoxin] + O2 + H(+) = 3,3'-biflaviolin + 2 oxidized [2Fe-2S]-[ferredoxin] + 2 H2O. It carries out the reaction 2 flaviolin + 2 reduced [2Fe-2S]-[ferredoxin] + O2 + H(+) = 3,8'-biflaviolin + 2 oxidized [2Fe-2S]-[ferredoxin] + 2 H2O. The protein operates within pigment biosynthesis. Its function is as follows. Catalyzes oxidative C-C coupling reaction to polymerize flaviolin and form highly conjugated pigments which protect the soil bacterium from deleterious effects of UV irradiation (two isomers of biflaviolin and one triflaviolin). The sequence is that of Biflaviolin synthase CYP158A1 from Streptomyces coelicolor (strain ATCC BAA-471 / A3(2) / M145).